Consider the following 206-residue polypeptide: Large ribosomal subunit protein uL4 (206 aa).

The segment covering 48–59 (THDTKTRSEVRG) has biased composition (basic and acidic residues). Residues 48 to 77 (THDTKTRSEVRGGGRKPWRQKGTGRARHGS) are disordered. Residues 60 to 77 (GGRKPWRQKGTGRARHGS) show a composition bias toward basic residues.

Belongs to the universal ribosomal protein uL4 family. In terms of assembly, part of the 50S ribosomal subunit.

In terms of biological role, one of the primary rRNA binding proteins, this protein initially binds near the 5'-end of the 23S rRNA. It is important during the early stages of 50S assembly. It makes multiple contacts with different domains of the 23S rRNA in the assembled 50S subunit and ribosome. Forms part of the polypeptide exit tunnel. In Pelotomaculum thermopropionicum (strain DSM 13744 / JCM 10971 / SI), this protein is Large ribosomal subunit protein uL4.